We begin with the raw amino-acid sequence, 377 residues long: Succinyl-diaminopimelate desuccinylase 2 (377 aa).

Zn(2+) is bound at residue His62. Asp64 is an active-site residue. Zn(2+) is bound at residue Asp95. The active-site Proton acceptor is Glu129. 3 residues coordinate Zn(2+): Glu130, Glu158, and His350.

Belongs to the peptidase M20A family. DapE subfamily. In terms of assembly, homodimer. Zn(2+) is required as a cofactor. It depends on Co(2+) as a cofactor.

It carries out the reaction N-succinyl-(2S,6S)-2,6-diaminopimelate + H2O = (2S,6S)-2,6-diaminopimelate + succinate. The protein operates within amino-acid biosynthesis; L-lysine biosynthesis via DAP pathway; LL-2,6-diaminopimelate from (S)-tetrahydrodipicolinate (succinylase route): step 3/3. Catalyzes the hydrolysis of N-succinyl-L,L-diaminopimelic acid (SDAP), forming succinate and LL-2,6-diaminopimelate (DAP), an intermediate involved in the bacterial biosynthesis of lysine and meso-diaminopimelic acid, an essential component of bacterial cell walls. This Shewanella loihica (strain ATCC BAA-1088 / PV-4) protein is Succinyl-diaminopimelate desuccinylase 2.